The chain runs to 279 residues: Urease accessory protein UreD (279 aa).

The protein belongs to the UreD family. In terms of assembly, ureD, UreF and UreG form a complex that acts as a GTP-hydrolysis-dependent molecular chaperone, activating the urease apoprotein by helping to assemble the nickel containing metallocenter of UreC. The UreE protein probably delivers the nickel.

The protein localises to the cytoplasm. Functionally, required for maturation of urease via the functional incorporation of the urease nickel metallocenter. This is Urease accessory protein UreD from Brucella suis (strain ATCC 23445 / NCTC 10510).